Reading from the N-terminus, the 65-residue chain is Bucain (65 aa).

Disulfide bonds link Cys-3–Cys-24, Cys-17–Cys-42, Cys-46–Cys-57, and Cys-58–Cys-63.

The protein belongs to the three-finger toxin family. Short-chain subfamily. Orphan group III sub-subfamily. Expressed by the venom gland.

It localises to the secreted. The chain is Bucain from Bungarus candidus (Malayan krait).